Consider the following 282-residue polypeptide: Protein NEOXANTHIN-DEFICIENT 1 (282 aa).

Required for neoxanthin biosynthesis. Probably not involved directly in the enzymatic conversion of violaxanthin to neoxanthin. Is necessary but not sufficient for neoxanthin synthesis. The chain is Protein NEOXANTHIN-DEFICIENT 1 from Arabidopsis thaliana (Mouse-ear cress).